The chain runs to 264 residues: Indole-3-glycerol phosphate synthase (264 aa).

Belongs to the TrpC family.

It catalyses the reaction 1-(2-carboxyphenylamino)-1-deoxy-D-ribulose 5-phosphate + H(+) = (1S,2R)-1-C-(indol-3-yl)glycerol 3-phosphate + CO2 + H2O. It functions in the pathway amino-acid biosynthesis; L-tryptophan biosynthesis; L-tryptophan from chorismate: step 4/5. The chain is Indole-3-glycerol phosphate synthase from Polaromonas sp. (strain JS666 / ATCC BAA-500).